Here is a 704-residue protein sequence, read N- to C-terminus: Phytyl ester synthase 1, chloroplastic (704 aa).

The transit peptide at 1–27 (MATCSSSLLVLPNLRLSSNQRRNFKVR) directs the protein to the chloroplast.

The protein belongs to the diacylglycerol acyltransferase family. Interacts with PGM48. In terms of tissue distribution, mostly expressed in flowers (e.g. sepals, petals and stamen).

Its subcellular location is the plastid. It is found in the chloroplast. The protein localises to the plastoglobule. It carries out the reaction a 1,2-diacyl-3-O-(beta-D-galactosyl)-sn-glycerol + a 1,2-diacylglycerol = an acyl-3-O-(beta-D-galactosyl)-sn-glycerol + a triacylglycerol. The enzyme catalyses a 1,2-diacylglycerol + a fatty acyl-CoA = a triacylglycerol + CoA. It catalyses the reaction a fatty acyl-[ACP] + a 1,2-diacylglycerol = a triacylglycerol + holo-[ACP]. The catalysed reaction is phytol + a fatty acyl-CoA = a fatty acid phytyl ester + CoA. It carries out the reaction phytol + tetradecanoyl-CoA = tetradecanoate phytyl ester + CoA. The enzyme catalyses a 1,3-diacylglycerol + a fatty acyl-CoA = a triacylglycerol + CoA. It catalyses the reaction 1,2-dihexanoylglycerol + tetradecanoyl-CoA = 1,2-dihexanoyl-3-tetradecanoylglycerol + CoA. The catalysed reaction is 1,2-dihexanoylglycerol + hexadecanoyl-CoA = 1,2-dihexanoyl-3-hexadecanoylglycerol + CoA. It carries out the reaction 1,2-dihexanoylglycerol + octadecanoyl-CoA = 1,2-dihexanoyl-3-octadecanoylglycerol + CoA. The enzyme catalyses (7Z,10Z,13Z)-hexadecatrienoyl-CoA + 1,2-dihexanoylglycerol = 1,2-dihexanoyl-3-(7Z,10Z,13Z-hexadecatrienoyl)-glycerol + CoA. It catalyses the reaction 1,2-dihexanoylglycerol + (9Z)-octadecenoyl-CoA = 1,2-dihexanoyl-3-(9Z-octadecenoyl)-glycerol + CoA. The catalysed reaction is 1,2-dihexanoylglycerol + (9Z,12Z,15Z)-octadecatrienoyl-CoA = 1,2-dihexanoyl-3-(9Z,12Z,15Z-octadecatrienoyl)-glycerol + CoA. It carries out the reaction phytol + decanoyl-CoA = decanoate phytyl ester + CoA. The enzyme catalyses (7Z,10Z,13Z)-hexadecatrienoyl-CoA + phytol = (7Z,10Z,13Z)-hexadecatrienoate phytyl ester + CoA. It catalyses the reaction phytol + dodecanoyl-CoA = dodecanoate phytyl ester + CoA. In terms of biological role, acyltransferase involved in fatty acid phytyl ester synthesis in chloroplasts, a process required for the maintenance of the photosynthetic membrane integrity during abiotic stress and senescence. Exhibits phytyl ester synthesis and diacylglycerol acyltransferase activities with broad substrate specificities, and can employ acyl-CoAs, acyl carrier proteins, and galactolipids as acyl donors. This chain is Phytyl ester synthase 1, chloroplastic, found in Arabidopsis thaliana (Mouse-ear cress).